Consider the following 230-residue polypeptide: MSKETSFVKNAEELAKQKMDAINPELSSKFKFLIKFLSQFPEACSKPRSKKMQNKVGQEEHIEYLARSFHESRLPRKPTPPTTVPDEVVSIVLNISFNIQPENLERIKEEHRLSMAAENIVGDLLERYLAEKLEPSGWIWCSGTSVKAVDFIHYDEKNNEWNLLQVKNRDNTENSSSSKIRDNTTIKKWFRTYSQRDATNWDNFPDEVSSKNLNEEDFRAFVKNYLVKII.

The catalysed reaction is Endonucleolytic cleavage of DNA to give specific double-stranded fragments with terminal 5'-phosphates.. A P subtype restriction enzyme that recognizes the double-stranded sequence 5'-GGWCC-3' and cleaves after G-1. The polypeptide is Type II restriction enzyme Eco47I (Escherichia coli).